Reading from the N-terminus, the 262-residue chain is Transmembrane and immunoglobulin domain-containing protein 1 (262 aa).

An N-terminal signal peptide occupies residues 1–29; that stretch reads MAWKSSVIMQMGRFLLLVILFLPREMTSS. Residues 30–114 enclose the Ig-like C2-type 1 domain; it reads VLTVNGKTEN…LGRDQSVSVS (85 aa). At 30-220 the chain is on the extracellular side; sequence VLTVNGKTEN…IVKDKTVGVP (191 aa). Cys-54 and Cys-103 form a disulfide bridge. N-linked (GlcNAc...) asparagine glycosylation is found at Asn-58, Asn-83, Asn-118, Asn-158, and Asn-190. Residues 122–207 enclose the Ig-like C2-type 2 domain; that stretch reads PPLLSGNDFQ…KSSLKTESLD (86 aa). Cys-143 and Cys-195 are oxidised to a cystine. Residues 221–241 traverse the membrane as a helical segment; sequence IEPIIAACVVIFLTLCFGLIA. Over 242 to 262 the chain is Cytoplasmic; sequence RRKKIMKLCMKDKDPHSETAL.

In terms of assembly, homodimer. N-glycosylated.

The protein resides in the cell membrane. The protein localises to the cytoplasm. Functionally, may control cell-cell adhesion, cell migration and proliferation, cell morphology, and protects renal epithelial cells from oxidative cell injury to promote cell survival. This Homo sapiens (Human) protein is Transmembrane and immunoglobulin domain-containing protein 1.